A 399-amino-acid polypeptide reads, in one-letter code: Large envelope protein (399 aa).

Met1 bears the N-acetylmethionine mark. Gly2 is lipidated: N-myristoyl glycine; by host. Residues 2–118 (GLSWTVPLEW…PPLRDSHPQA (117 aa)) are pre-S1. Positions 2–173 (GLSWTVPLEW…FSRIGDPAPN (172 aa)) are pre-S. The Virion surface; in external conformation segment spans residues 2-180 (GLSWTVPLEW…APNMENITSG (179 aa)). Residues 2 to 252 (GLSWTVPLEW…PGYRWMCLRR (251 aa)) lie on the Intravirion; in internal conformation side of the membrane. Ser4 carries N-linked (GlcNAc...) asparagine glycosylation. The interval 69 to 117 (PHGGLLGWSPQSQGTLTTLPADPPPASTNRQSGRQPTPISPPLRDSHPQ) is disordered. A pre-S2 region spans residues 119–173 (MQWNSTAFHQALQNPKVRGLYFPAGGSSSGIVNPVPTIASHISSIFSRIGDPAPN). Residues 181–201 (FLGPLLVLQAGFFLLTRILTI) form a helical membrane-spanning segment. Topologically, residues 202–252 (PQSLDSWWTSLNFLGGVPVCPGLNSQSPTSNHSPISCPPTCPGYRWMCLRR) are intravirion; in external conformation. The helical transmembrane segment at 253–273 (FIIFLFILLLCLIFLLVLLDY) threads the bilayer. Residues 274–347 (QGMLPVCPLI…WASVRFSWLS (74 aa)) lie on the Virion surface side of the membrane. The N-linked (GlcNAc...) asparagine; by host glycan is linked to Asn319. The chain crosses the membrane as a helical span at residues 348-368 (LLVPFVQWFVGLSPTVWLSAI). The Intravirion segment spans residues 369-374 (WMMWYW). The chain crosses the membrane as a helical span at residues 375–397 (GPNLYNILSPFIPLLPIFFCLWV). Topologically, residues 398-399 (YI) are virion surface.

It belongs to the orthohepadnavirus major surface antigen family. As to quaternary structure, in its internal form (Li-HBsAg), interacts with the capsid protein and with the isoform S. Interacts with host chaperone CANX. Associates with host chaperone CANX through its pre-S2 N glycan; this association may be essential for isoform M proper secretion. In terms of assembly, interacts with isoform L. Interacts with the antigens of satellite virus HDV (HDVAgs); this interaction is required for encapsidation of HDV genomic RNA. In terms of processing, isoform M is N-terminally acetylated by host at a ratio of 90%, and N-glycosylated by host at the pre-S2 region. Post-translationally, myristoylated.

Its subcellular location is the virion membrane. Its function is as follows. The large envelope protein exists in two topological conformations, one which is termed 'external' or Le-HBsAg and the other 'internal' or Li-HBsAg. In its external conformation the protein attaches the virus to cell receptors and thereby initiating infection. This interaction determines the species specificity and liver tropism. This attachment induces virion internalization predominantly through caveolin-mediated endocytosis. The large envelope protein also assures fusion between virion membrane and endosomal membrane. In its internal conformation the protein plays a role in virion morphogenesis and mediates the contact with the nucleocapsid like a matrix protein. In terms of biological role, the middle envelope protein plays an important role in the budding of the virion. It is involved in the induction of budding in a nucleocapsid independent way. In this process the majority of envelope proteins bud to form subviral lipoprotein particles of 22 nm of diameter that do not contain a nucleocapsid. This chain is Large envelope protein, found in Hepatitis B virus genotype G (isolate IG29227/2000) (HBV-G).